Here is a 190-residue protein sequence, read N- to C-terminus: Major intrinsically disordered NOTCH2-binding receptor 1-like (190 aa).

Ser-79 is modified (phosphoserine). N-linked (GlcNAc...) asparagine glycans are attached at residues Asn-109 and Asn-125. Residues 169–189 (GLILLVVISILVTIVTIITFF) form a helical membrane-spanning segment.

It belongs to the MINAR family. In terms of assembly, interacts with NOTCH2. As to expression, highly expressed in the auditory hair cells.

The protein resides in the lysosome membrane. Its subcellular location is the endoplasmic reticulum membrane. Binds cholesterol and may regulate the distribution and homeostasis of cholesterol in hair cells. May play a role in angiogenesis. The protein is Major intrinsically disordered NOTCH2-binding receptor 1-like of Homo sapiens (Human).